A 185-amino-acid polypeptide reads, in one-letter code: Elongation factor P (185 aa).

The protein belongs to the elongation factor P family.

The protein localises to the cytoplasm. The protein operates within protein biosynthesis; polypeptide chain elongation. Functionally, involved in peptide bond synthesis. Stimulates efficient translation and peptide-bond synthesis on native or reconstituted 70S ribosomes in vitro. Probably functions indirectly by altering the affinity of the ribosome for aminoacyl-tRNA, thus increasing their reactivity as acceptors for peptidyl transferase. This chain is Elongation factor P, found in Deinococcus deserti (strain DSM 17065 / CIP 109153 / LMG 22923 / VCD115).